The primary structure comprises 265 residues: MKIAIAGASGRMGRMLIEAVLNDADAQLVGALDRAGSPFLGQDAGAFLGKDTGVKLTDDLDAVFAQAEYLIDFTRPEGTMAHIEAALRHDVKLVIGTTGFTAEQKADLQAAAARIGIVFAANMSVGVNVTLKLLEFAAQHFSHGYDIEIIEAHHRHKVDAPSGTALMMGEAVAGALGRSLDDCAVYGRHGVTGERDPSSIGFAAVRGGDIVGDHTVLFAGIGERIEITHKSSSRVSYAQGALRAVRFLSARGAGLFDMQDVLGLR.

NAD(+)-binding positions include 7–12 and Asp33; that span reads GASGRM. Arg34 is an NADP(+) binding site. NAD(+) contacts are provided by residues 96-98 and 120-123; these read GTT and AANM. The active-site Proton donor/acceptor is His153. (S)-2,3,4,5-tetrahydrodipicolinate is bound at residue His154. Lys157 serves as the catalytic Proton donor. 163–164 provides a ligand contact to (S)-2,3,4,5-tetrahydrodipicolinate; that stretch reads GT.

The protein belongs to the DapB family.

Its subcellular location is the cytoplasm. It carries out the reaction (S)-2,3,4,5-tetrahydrodipicolinate + NAD(+) + H2O = (2S,4S)-4-hydroxy-2,3,4,5-tetrahydrodipicolinate + NADH + H(+). The catalysed reaction is (S)-2,3,4,5-tetrahydrodipicolinate + NADP(+) + H2O = (2S,4S)-4-hydroxy-2,3,4,5-tetrahydrodipicolinate + NADPH + H(+). It participates in amino-acid biosynthesis; L-lysine biosynthesis via DAP pathway; (S)-tetrahydrodipicolinate from L-aspartate: step 4/4. Catalyzes the conversion of 4-hydroxy-tetrahydrodipicolinate (HTPA) to tetrahydrodipicolinate. In Burkholderia orbicola (strain AU 1054), this protein is 4-hydroxy-tetrahydrodipicolinate reductase.